The primary structure comprises 651 residues: Acetyl-coenzyme A synthetase (651 aa).

CoA is bound by residues 191 to 194 (RGGK), threonine 311, and asparagine 335. Residues 387–389 (GEP), 411–416 (DTWWQT), aspartate 500, and arginine 515 each bind ATP. Serine 523 provides a ligand contact to CoA. Arginine 526 is a binding site for ATP. Mg(2+)-binding residues include valine 537, histidine 539, and valine 542. Arginine 584 provides a ligand contact to CoA. Lysine 609 is modified (N6-acetyllysine).

Belongs to the ATP-dependent AMP-binding enzyme family. Mg(2+) serves as cofactor. Post-translationally, acetylated. Deacetylation by the SIR2-homolog deacetylase activates the enzyme.

The catalysed reaction is acetate + ATP + CoA = acetyl-CoA + AMP + diphosphate. Functionally, catalyzes the conversion of acetate into acetyl-CoA (AcCoA), an essential intermediate at the junction of anabolic and catabolic pathways. AcsA undergoes a two-step reaction. In the first half reaction, AcsA combines acetate with ATP to form acetyl-adenylate (AcAMP) intermediate. In the second half reaction, it can then transfer the acetyl group from AcAMP to the sulfhydryl group of CoA, forming the product AcCoA. The sequence is that of Acetyl-coenzyme A synthetase from Pseudomonas savastanoi pv. phaseolicola (strain 1448A / Race 6) (Pseudomonas syringae pv. phaseolicola (strain 1448A / Race 6)).